Here is a 296-residue protein sequence, read N- to C-terminus: Cytidine deaminase (296 aa).

CMP/dCMP-type deaminase domains are found at residues threonine 47–lysine 167 and aspartate 186–valine 296. Substrate is bound at residue asparagine 88–glutamate 90. Histidine 101 lines the Zn(2+) pocket. Glutamate 103 serves as the catalytic Proton donor. Positions 128 and 131 each coordinate Zn(2+).

Belongs to the cytidine and deoxycytidylate deaminase family. Homodimer. The cofactor is Zn(2+).

The catalysed reaction is cytidine + H2O + H(+) = uridine + NH4(+). It carries out the reaction 2'-deoxycytidine + H2O + H(+) = 2'-deoxyuridine + NH4(+). In terms of biological role, this enzyme scavenges exogenous and endogenous cytidine and 2'-deoxycytidine for UMP synthesis. This Shewanella sp. (strain MR-7) protein is Cytidine deaminase.